The chain runs to 280 residues: Putative pyruvate, phosphate dikinase regulatory protein 1 (280 aa).

152 to 159 lines the ADP pocket; that stretch reads GVSRTSKT.

It belongs to the pyruvate, phosphate/water dikinase regulatory protein family. PDRP subfamily.

The enzyme catalyses N(tele)-phospho-L-histidyl/L-threonyl-[pyruvate, phosphate dikinase] + ADP = N(tele)-phospho-L-histidyl/O-phospho-L-threonyl-[pyruvate, phosphate dikinase] + AMP + H(+). It carries out the reaction N(tele)-phospho-L-histidyl/O-phospho-L-threonyl-[pyruvate, phosphate dikinase] + phosphate + H(+) = N(tele)-phospho-L-histidyl/L-threonyl-[pyruvate, phosphate dikinase] + diphosphate. Functionally, bifunctional serine/threonine kinase and phosphorylase involved in the regulation of the pyruvate, phosphate dikinase (PPDK) by catalyzing its phosphorylation/dephosphorylation. This Latilactobacillus sakei subsp. sakei (strain 23K) (Lactobacillus sakei subsp. sakei) protein is Putative pyruvate, phosphate dikinase regulatory protein 1.